We begin with the raw amino-acid sequence, 519 residues long: Exodeoxyribonuclease 7 large subunit (519 aa).

The tract at residues Val-500 to Leu-519 is disordered.

This sequence belongs to the XseA family. Heterooligomer composed of large and small subunits.

The protein resides in the cytoplasm. It carries out the reaction Exonucleolytic cleavage in either 5'- to 3'- or 3'- to 5'-direction to yield nucleoside 5'-phosphates.. Bidirectionally degrades single-stranded DNA into large acid-insoluble oligonucleotides, which are then degraded further into small acid-soluble oligonucleotides. The sequence is that of Exodeoxyribonuclease 7 large subunit from Cereibacter sphaeroides (strain ATCC 17023 / DSM 158 / JCM 6121 / CCUG 31486 / LMG 2827 / NBRC 12203 / NCIMB 8253 / ATH 2.4.1.) (Rhodobacter sphaeroides).